The following is a 475-amino-acid chain: Cytochrome P450 monooxygenase sthD (475 aa).

The N-terminal stretch at 1 to 17 (MAAYFLLGLYGSTLVYR) is a signal peptide. Residues 276-296 (FIIIAGSDTVAATLTFAFFYL) traverse the membrane as a helical segment. N-linked (GlcNAc...) asparagine glycosylation is present at N336. A heme-binding site is contributed by C418.

This sequence belongs to the cytochrome P450 family. It depends on heme as a cofactor.

It is found in the membrane. It carries out the reaction betaenone A + NADPH + O2 + H(+) = stemphyloxin II + NADP(+) + H2O. The enzyme catalyses betaenone C + NADPH + O2 + H(+) = stemphyloxin I + NADP(+) + H2O. Its pathway is mycotoxin biosynthesis. Cytochrome P450 monooxygenase; part of the gene cluster that mediates the biosynthesis of the phytotoxin stemphyloxin II. The first step of the pathway is the synthesis of dehydroprobetaenone I by the polyketide synthase sthA and the enoyl reductase sthE via condensation of one acetyl-CoA starter unit with 7 malonyl-CoA units and 5 methylations. The C-terminal reductase (R) domain of sthA catalyzes the reductive release of the polyketide chain. Because sthA lacks a designated enoylreductase (ER) domain, the required activity is provided the enoyl reductase sthE. The short-chain dehydrogenase/reductase sthC then catalyzes reduction of dehydroprobetaenone I to probetaenone I. The cytochrome P450 monooxygenase sthF catalyzes successive epoxidation, oxidation (resulting from epoxide opening) and hydroxylation to install a tertiary alcohol in the decaline ring to yield betaenone C from dehydroprobetaenone I and betaenone B from probetaenone I. The FAD-linked oxidoreductase sthB is responsible for the conversion of betaenone C to betaenone A via an intramolecular aldol reaction between C-1 and C-17 to form the bridged tricyclic system in betaenone A. Finally, the cytochrome P450 monooxygenase sthD catalyzes the hydroxylation of C-15 to afford the final metabolite stemphyloxin II. The polypeptide is Cytochrome P450 monooxygenase sthD (Phaeosphaeria nodorum (strain SN15 / ATCC MYA-4574 / FGSC 10173) (Glume blotch fungus)).